The following is a 196-amino-acid chain: CASP-like protein 1D1 (196 aa).

The span at 1 to 18 shows a compositional bias: basic and acidic residues; that stretch reads MASTDKPDRESIKSEEAP. The interval 1 to 22 is disordered; that stretch reads MASTDKPDRESIKSEEAPAAHP. Topologically, residues 1-29 are cytoplasmic; sequence MASTDKPDRESIKSEEAPAAHPRRSNYSS. A helical membrane pass occupies residues 30 to 50; it reads VHVALRFLLFAASVTAVVVMV. Over 51–84 the chain is Extracellular; sequence TAKQTKIVPVPGLPISVPLEAKFSDSPAFLYFIS. A helical transmembrane segment spans residues 85–105; it reads ALSVAGLYGILTTLAAISIVL. Topologically, residues 106–112 are cytoplasmic; the sequence is KPAYATR. The helical transmembrane segment at 113-133 threads the bilayer; that stretch reads FLLHFALLDVLMLGIVASATG. Residues 134-167 lie on the Extracellular side of the membrane; that stretch reads AAGGVAYVGLKGNSHVRWGKVCNVYDKFCQHVGS. Residues 168–188 form a helical membrane-spanning segment; sequence SIAVALFASVLLVLLTMLSVF. The Cytoplasmic portion of the chain corresponds to 189–196; that stretch reads SIYRKIPK.

This sequence belongs to the Casparian strip membrane proteins (CASP) family. Homodimer and heterodimers.

It localises to the cell membrane. The protein is CASP-like protein 1D1 of Populus trichocarpa (Western balsam poplar).